The primary structure comprises 1037 residues: Probable serine/threonine-protein kinase KCC4 (1037 aa).

In terms of domain architecture, Protein kinase spans 21-285 (WKLGETLGFG…IRDILSHPLL (265 aa)). ATP is bound by residues 27-35 (LGFGSTGKV) and Lys50. The active-site Proton acceptor is the Asp152. Residues 372 to 387 (NKKNRNKIKKTKKNKR) are compositionally biased toward basic residues. The segment at 372-494 (NKKNRNKIKK…MPNTKRSSLT (123 aa)) is disordered. The span at 388–404 (SSTLSSSSSLLLNNRSI) shows a compositional bias: low complexity. The residue at position 396 (Ser396) is a Phosphoserine. Residues 408-427 (PRRRTSKRHSREFSSSRKRS) show a composition bias toward basic residues. Residues 453–465 (NVASANTQATPSG) are compositionally biased toward polar residues. Positions 469–480 (PHKRNSKKRSSK) are enriched in basic residues. The segment covering 481 to 494 (RLSYMPNTKRSSLT) has biased composition (low complexity). A phosphoserine mark is found at Ser675, Ser707, Ser777, Ser822, Ser825, and Ser871. Disordered regions lie at residues 746–804 (LIKE…DFPQ), 810–829 (QEYD…KSAE), and 861–918 (TLPS…TVKK). Residues 861-873 (TLPSLTSNNSSVG) show a composition bias toward polar residues. The segment covering 879–888 (GAEKGTESEK) has biased composition (basic and acidic residues).

This sequence belongs to the protein kinase superfamily. CAMK Ser/Thr protein kinase family. NIM1 subfamily. As to quaternary structure, interacts with septin proteins, primarily with CDC11. Interacts with SWE1 and NAP1.

It is found in the bud neck. It carries out the reaction L-seryl-[protein] + ATP = O-phospho-L-seryl-[protein] + ADP + H(+). It catalyses the reaction L-threonyl-[protein] + ATP = O-phospho-L-threonyl-[protein] + ADP + H(+). Its function is as follows. Involved in regulation of bud growth during cell cycle and in septin organization. Plays a role in cell wall synthesis. This chain is Probable serine/threonine-protein kinase KCC4 (KCC4), found in Saccharomyces cerevisiae (strain ATCC 204508 / S288c) (Baker's yeast).